Consider the following 955-residue polypeptide: Anoctamin-4 (955 aa).

At 1 to 352 (MEASSSGITN…FGEKIGLYFA (352 aa)) the chain is on the cytoplasmic side. The interval 73–97 (KDDDSLLHPGNLTSTSEDTSRLEAG) is disordered. A helical membrane pass occupies residues 353 to 373 (WLGWYTGMLFPAAFIGLFVFL). The Extracellular portion of the chain corresponds to 374–424 (YGVTTLDHCQVSKEVCQATDIIMCPVCDKYCPFMRLSDSCVYAKVTHLFDN). Residues 425–445 (GATVFFAVFMAVWATVFLEFW) traverse the membrane as a helical segment. The Cytoplasmic portion of the chain corresponds to 446–505 (KRRRAVIAYDWDLIDWEEEEEEIRPQFEAKYSKKERMNPISGKPEPYQAFTDKCSRLIVS). A helical transmembrane segment spans residues 506-526 (ASGIFFMICVVIAAVFGIVIY). Over 527–547 (RVVTVSTFAAFKWALIRNNSQ) the chain is Extracellular. Asn-544 carries an N-linked (GlcNAc...) asparagine glycan. Residues 548–568 (VATTGTAVCINFCIIMLLNVL) form a helical membrane-spanning segment. Topologically, residues 569–595 (YEKVALLLTNLEQPRTESEWENSFTLK) are cytoplasmic. The chain crosses the membrane as a helical span at residues 596-616 (MFLFQFVNLNSSTFYIAFFLG). Residues 617–715 (RFTGHPGAYL…AYGLFDEYLE (99 aa)) lie on the Extracellular side of the membrane. The helical transmembrane segment at 716–736 (MILQFGFTTIFVAAFPLAPLL) threads the bilayer. Residues 737–768 (ALLNNIIEIRLDAYKFVTQWRRPLASRAKDIG) lie on the Cytoplasmic side of the membrane. Residues 769–789 (IWYGILEGIGILSVITNAFVI) traverse the membrane as a helical segment. Over 790 to 885 (AITSDFIPRL…QFWHVLAARL (96 aa)) the chain is Extracellular. N-linked (GlcNAc...) asparagine glycosylation is found at Asn-824 and Asn-837. A helical transmembrane segment spans residues 886–906 (AFIIVFEHLVFCIKHLISYLI). Topologically, residues 907-955 (PDLPKDLRDRMRREKYLIQEMMYEAELERLQKERKERKKNGKAHHNEWP) are cytoplasmic.

The protein belongs to the anoctamin family. Predominantly expressed in neuronal tissues. Expressed at low levels in ovary, uterus, heart and brain.

Its subcellular location is the cell membrane. The catalysed reaction is a 1,2-diacyl-sn-glycero-3-phospho-L-serine(in) = a 1,2-diacyl-sn-glycero-3-phospho-L-serine(out). It catalyses the reaction a beta-D-galactosyl-(1&lt;-&gt;1')-N-acylsphing-4-enine(out) = a beta-D-galactosyl-(1&lt;-&gt;1')-N-acylsphing-4-enine(in). It carries out the reaction a 1,2-diacyl-sn-glycero-3-phosphocholine(in) = a 1,2-diacyl-sn-glycero-3-phosphocholine(out). Has calcium-dependent phospholipid scramblase activity; scrambles phosphatidylserine, phosphatidylcholine and galactosylceramide. Does not exhibit calcium-activated chloride channel (CaCC) activity. This is Anoctamin-4 from Mus musculus (Mouse).